The following is a 331-amino-acid chain: Biotin synthase (331 aa).

Positions 39–264 constitute a Radical SAM core domain; it reads SELQTCYLVS…VFPQSMVRLA (226 aa). [4Fe-4S] cluster is bound by residues Cys-54, Cys-58, and Cys-61. Residues Cys-98, Cys-130, Cys-190, and Arg-262 each contribute to the [2Fe-2S] cluster site.

This sequence belongs to the radical SAM superfamily. Biotin synthase family. As to quaternary structure, homodimer. It depends on [4Fe-4S] cluster as a cofactor. [2Fe-2S] cluster is required as a cofactor.

The catalysed reaction is (4R,5S)-dethiobiotin + (sulfur carrier)-SH + 2 reduced [2Fe-2S]-[ferredoxin] + 2 S-adenosyl-L-methionine = (sulfur carrier)-H + biotin + 2 5'-deoxyadenosine + 2 L-methionine + 2 oxidized [2Fe-2S]-[ferredoxin]. The protein operates within cofactor biosynthesis; biotin biosynthesis; biotin from 7,8-diaminononanoate: step 2/2. Functionally, catalyzes the conversion of dethiobiotin (DTB) to biotin by the insertion of a sulfur atom into dethiobiotin via a radical-based mechanism. The polypeptide is Biotin synthase (Chlamydia abortus (strain DSM 27085 / S26/3) (Chlamydophila abortus)).